A 278-amino-acid polypeptide reads, in one-letter code: Hydroxyethylthiazole kinase (278 aa).

Met49 is a substrate binding site. Residues Asn125 and Ser171 each coordinate ATP. Gly198 is a binding site for substrate.

Belongs to the Thz kinase family. It depends on Mg(2+) as a cofactor.

The catalysed reaction is 5-(2-hydroxyethyl)-4-methylthiazole + ATP = 4-methyl-5-(2-phosphooxyethyl)-thiazole + ADP + H(+). Its pathway is cofactor biosynthesis; thiamine diphosphate biosynthesis; 4-methyl-5-(2-phosphoethyl)-thiazole from 5-(2-hydroxyethyl)-4-methylthiazole: step 1/1. Functionally, catalyzes the phosphorylation of the hydroxyl group of 4-methyl-5-beta-hydroxyethylthiazole (THZ). This chain is Hydroxyethylthiazole kinase, found in Natronomonas pharaonis (strain ATCC 35678 / DSM 2160 / CIP 103997 / JCM 8858 / NBRC 14720 / NCIMB 2260 / Gabara) (Halobacterium pharaonis).